Reading from the N-terminus, the 396-residue chain is Argininosuccinate synthase (396 aa).

Residue 6-14 (AYSGGLDTS) participates in ATP binding. Residue Tyr-83 coordinates L-citrulline. Gly-113 contacts ATP. Residues Thr-115, Asn-119, and Asp-120 each coordinate L-aspartate. Asn-119 contributes to the L-citrulline binding site. Residues Arg-123, Ser-171, Ser-180, Glu-256, and Tyr-268 each contribute to the L-citrulline site.

This sequence belongs to the argininosuccinate synthase family. Type 1 subfamily. As to quaternary structure, homotetramer.

Its subcellular location is the cytoplasm. It carries out the reaction L-citrulline + L-aspartate + ATP = 2-(N(omega)-L-arginino)succinate + AMP + diphosphate + H(+). It participates in amino-acid biosynthesis; L-arginine biosynthesis; L-arginine from L-ornithine and carbamoyl phosphate: step 2/3. This is Argininosuccinate synthase from Hyperthermus butylicus (strain DSM 5456 / JCM 9403 / PLM1-5).